Here is a 411-residue protein sequence, read N- to C-terminus: ATPase GET3B (411 aa).

The N-terminal 67 residues, 1-67, are a transit peptide targeting the chloroplast; it reads MATLSSYLLS…RRRNSLQVKS (67 aa). 95 to 102 is a binding site for ATP; the sequence is KGGVGKTS. Asp124 is an active-site residue. Asn348 is a binding site for ATP.

This sequence belongs to the arsA ATPase family.

It is found in the plastid. The protein resides in the chloroplast stroma. It catalyses the reaction ATP + H2O = ADP + phosphate + H(+). This Arabidopsis thaliana (Mouse-ear cress) protein is ATPase GET3B.